A 211-amino-acid polypeptide reads, in one-letter code: Cytochrome c biogenesis ATP-binding export protein CcmA 2 (211 aa).

Positions 6–208 (LEARELGVRR…GAVLDLATDA (203 aa)) constitute an ABC transporter domain. 38–45 (GPNGAGKT) is a binding site for ATP.

Belongs to the ABC transporter superfamily. CcmA exporter (TC 3.A.1.107) family. In terms of assembly, the complex is composed of two ATP-binding proteins (CcmA) and two transmembrane proteins (CcmB).

It localises to the cell inner membrane. It carries out the reaction heme b(in) + ATP + H2O = heme b(out) + ADP + phosphate + H(+). Part of the ABC transporter complex CcmAB involved in the biogenesis of c-type cytochromes; once thought to export heme, this seems not to be the case, but its exact role is uncertain. Responsible for energy coupling to the transport system. The chain is Cytochrome c biogenesis ATP-binding export protein CcmA 2 from Cupriavidus metallidurans (strain ATCC 43123 / DSM 2839 / NBRC 102507 / CH34) (Ralstonia metallidurans).